A 120-amino-acid polypeptide reads, in one-letter code: NAD(P)H-quinone oxidoreductase subunit 3, chloroplastic (120 aa).

3 helical membrane-spanning segments follow: residues 10-30 (LWFF…ISEI), 64-84 (MFAL…PWAI), and 89-109 (LGIS…VGLV).

The protein belongs to the complex I subunit 3 family. As to quaternary structure, NDH is composed of at least 16 different subunits, 5 of which are encoded in the nucleus.

The protein localises to the plastid. Its subcellular location is the chloroplast thylakoid membrane. The catalysed reaction is a plastoquinone + NADH + (n+1) H(+)(in) = a plastoquinol + NAD(+) + n H(+)(out). It catalyses the reaction a plastoquinone + NADPH + (n+1) H(+)(in) = a plastoquinol + NADP(+) + n H(+)(out). NDH shuttles electrons from NAD(P)H:plastoquinone, via FMN and iron-sulfur (Fe-S) centers, to quinones in the photosynthetic chain and possibly in a chloroplast respiratory chain. The immediate electron acceptor for the enzyme in this species is believed to be plastoquinone. Couples the redox reaction to proton translocation, and thus conserves the redox energy in a proton gradient. The polypeptide is NAD(P)H-quinone oxidoreductase subunit 3, chloroplastic (Chara vulgaris (Common stonewort)).